The sequence spans 489 residues: Ketol-acid reductoisomerase (NADP(+)) (489 aa).

A KARI N-terminal Rossmann domain is found at 16–207 (IKKCRFMEKK…GGHRAGVLES (192 aa)). NADP(+) is bound by residues 44–47 (CGSQ), arginine 67, serine 77, and 107–109 (DKQ). Histidine 131 is an active-site residue. Residue glycine 157 participates in NADP(+) binding. KARI C-terminal knotted domains lie at 208–343 (SFVA…QSPD) and 344–483 (YDKK…MKNM). Positions 216, 220, 388, and 392 each coordinate Mg(2+). Residue serine 413 coordinates substrate.

It belongs to the ketol-acid reductoisomerase family. Mg(2+) serves as cofactor.

The catalysed reaction is (2R)-2,3-dihydroxy-3-methylbutanoate + NADP(+) = (2S)-2-acetolactate + NADPH + H(+). It catalyses the reaction (2R,3R)-2,3-dihydroxy-3-methylpentanoate + NADP(+) = (S)-2-ethyl-2-hydroxy-3-oxobutanoate + NADPH + H(+). The protein operates within amino-acid biosynthesis; L-isoleucine biosynthesis; L-isoleucine from 2-oxobutanoate: step 2/4. It functions in the pathway amino-acid biosynthesis; L-valine biosynthesis; L-valine from pyruvate: step 2/4. Functionally, involved in the biosynthesis of branched-chain amino acids (BCAA). Catalyzes an alkyl-migration followed by a ketol-acid reduction of (S)-2-acetolactate (S2AL) to yield (R)-2,3-dihydroxy-isovalerate. In the isomerase reaction, S2AL is rearranged via a Mg-dependent methyl migration to produce 3-hydroxy-3-methyl-2-ketobutyrate (HMKB). In the reductase reaction, this 2-ketoacid undergoes a metal-dependent reduction by NADPH to yield (R)-2,3-dihydroxy-isovalerate. The protein is Ketol-acid reductoisomerase (NADP(+)) of Buchnera aphidicola subsp. Diuraphis noxia.